A 2548-amino-acid polypeptide reads, in one-letter code: Unconventional myosin-IXa (2548 aa).

Positions 14–112 (NEHTLRIYPG…YRFLLREKNL (99 aa)) constitute a Ras-associating domain. The Myosin motor domain maps to 146 to 1016 (KDFDDLCSLP…ERQHLQDLLH (871 aa)). The helical transmembrane segment at 175 to 195 (IYTYVGSILIVINPFKFLPIY) threads the bilayer. 239–246 (GESGSGKT) serves as a coordination point for ATP. Phosphoserine is present on Ser-755. The actin-binding stretch occupies residues 898–920 (LSKLMETLGQAEPYFVKCIRSNA). IQ domains follow at residues 1021–1041 (RRIILLQRWFRVLLCRQHFLH), 1042–1071 (LRQASVIIQRFWRNYLNQKQVRDAAVQKDA), 1074–1103 (MASAAALLQASWRAHLERQRYLELRAAAIV), 1115–1144 (RHMAAICIQARWKAYRESKRYQEQRKKIIL), and 1138–1167 (QRKKIILLQSTCRGFRARQRFKALKEQRLR). The neck or regulatory domain stretch occupies residues 1021-1162 (RRIILLQRWF…RARQRFKALK (142 aa)). The tail stretch occupies residues 1163-2511 (EQRLRETKPE…LKNVKNSPQK (1349 aa)). Basic and acidic residues predominate over residues 1223–1236 (SVDCLKESPNKQQE). Residues 1223–1250 (SVDCLKESPNKQQERAQSQSGVDLQEDV) are disordered. Phosphoserine occurs at positions 1242 and 1258. Positions 1264-1291 (QKKVGRAKRESRRMRELEQAIFSLELLK) form a coiled coil. Phosphoserine occurs at positions 1299 and 1317. Positions 1299–1386 (SPSEDRRWST…SNETSSAEHL (88 aa)) are disordered. 2 stretches are compositionally biased toward low complexity: residues 1324 to 1337 (SESSQGSLELLSYE) and 1356 to 1366 (FPSPKISSSPK). Ser-1364 carries the phosphoserine modification. Polar residues predominate over residues 1372–1381 (NALSASNETS). Residues 1486–1532 (VLKKLEKLNTEKEERQKQLQQQNEKEMMEQIRQQTDILEKERKAFKT) adopt a coiled-coil conformation. Residues 1804-1836 (YHPTPPLSPELPGSCRKEFKENKEPSPKAKRKR) form a disordered region. The span at 1818–1830 (CRKEFKENKEPSP) shows a compositional bias: basic and acidic residues. Ser-1948 is modified (phosphoserine). 2 Phorbol-ester/DAG-type zinc fingers span residues 1999-2048 (GHIF…TAKC) and 2068-2119 (LTSE…DAES). A Rho-GAP domain is found at 2063–2251 (VELSRLTSED…LIVVEQMNKY (189 aa)). Ser-2294 bears the Phosphoserine mark. Residues 2315–2358 (AAMETDITEQQQAAMQQEERVLTEQIENLQKEKEELTFEMLVLE) adopt a coiled-coil conformation. Disordered stretches follow at residues 2359-2383 (PRASDDETLESEASIGTADSSENLN) and 2401-2424 (SSLKTAGKSEPSSKLRKQLKKQQD). Residue Ser-2464 is modified to Phosphoserine. The segment at 2490–2531 (RGTFNPEKGKQKLKNVKNSPQKTKETPEGTVMSGRRKTVDPD) is disordered.

This sequence belongs to the TRAFAC class myosin-kinesin ATPase superfamily. Myosin family. Phosphorylated by ALPK1 following monosodium urate monohydrate (MSU)-induced inflammation. In terms of tissue distribution, found to be expressed in testis and placenta and at lower levels in all the examined tissues with the exception of liver. Isoform 5: Found in leukocytes but not in brain, retina or testis.

The protein localises to the membrane. It is found in the cytoplasm. It localises to the synapse. The protein resides in the cell projection. Its subcellular location is the growth cone. Myosins are actin-based motor molecules with ATPase activity. Unconventional myosins serve in intracellular movements. Regulates Rho by stimulating it's GTPase activity in neurons. Required for the regulation of neurite branching and motor neuron axon guidance. The polypeptide is Unconventional myosin-IXa (MYO9A) (Homo sapiens (Human)).